A 431-amino-acid chain; its full sequence is Adenylosuccinate synthetase (431 aa).

GTP is bound by residues 12–18 (GDEGKGK) and 40–42 (GHT). Asp-13 functions as the Proton acceptor in the catalytic mechanism. 2 residues coordinate Mg(2+): Asp-13 and Gly-40. IMP contacts are provided by residues 13–16 (DEGK), 38–41 (NAGH), Thr-131, Arg-145, Gln-225, Thr-240, and Arg-304. Catalysis depends on His-41, which acts as the Proton donor. 300–306 (VNTGRPR) lines the substrate pocket. GTP is bound by residues Arg-306, 332 to 334 (KLD), and 414 to 416 (STS).

This sequence belongs to the adenylosuccinate synthetase family. As to quaternary structure, homodimer. Mg(2+) is required as a cofactor.

Its subcellular location is the cytoplasm. It carries out the reaction IMP + L-aspartate + GTP = N(6)-(1,2-dicarboxyethyl)-AMP + GDP + phosphate + 2 H(+). The protein operates within purine metabolism; AMP biosynthesis via de novo pathway; AMP from IMP: step 1/2. Functionally, plays an important role in the de novo pathway of purine nucleotide biosynthesis. Catalyzes the first committed step in the biosynthesis of AMP from IMP. This is Adenylosuccinate synthetase from Rhizobium rhizogenes (strain K84 / ATCC BAA-868) (Agrobacterium radiobacter).